The following is a 194-amino-acid chain: MTIKLIVGLANPGAEYAATRHNAGAWFVDLLAERLRAPLREEAKFFGYTSRVTLGGEDVRLLVPTTFMNLSGKAVAAMASFFRINPDEILVAHDELDLPPGVAKLKLGGGHGGHNGLKDIISKLGNNPNFHRLRIGIGHPGDKNKVVGFVLGKPPVSEQKLIDEAIDEAARCTEMWFTDGLTKATNRLHAFKAQ.

Residue tyrosine 16 coordinates tRNA. Catalysis depends on histidine 21, which acts as the Proton acceptor. Residues phenylalanine 67, asparagine 69, and asparagine 115 each coordinate tRNA.

Belongs to the PTH family. As to quaternary structure, monomer.

It is found in the cytoplasm. The catalysed reaction is an N-acyl-L-alpha-aminoacyl-tRNA + H2O = an N-acyl-L-amino acid + a tRNA + H(+). In terms of biological role, hydrolyzes ribosome-free peptidyl-tRNAs (with 1 or more amino acids incorporated), which drop off the ribosome during protein synthesis, or as a result of ribosome stalling. Its function is as follows. Catalyzes the release of premature peptidyl moieties from peptidyl-tRNA molecules trapped in stalled 50S ribosomal subunits, and thus maintains levels of free tRNAs and 50S ribosomes. This chain is Peptidyl-tRNA hydrolase, found in Shigella boydii serotype 18 (strain CDC 3083-94 / BS512).